A 314-amino-acid polypeptide reads, in one-letter code: tRNA uridine(34) hydroxylase (314 aa).

The Rhodanese domain occupies 140–234 (ARDDVILIDT…YLEETPPDES (95 aa)). The active-site Cysteine persulfide intermediate is cysteine 194.

It belongs to the TrhO family.

It catalyses the reaction uridine(34) in tRNA + AH2 + O2 = 5-hydroxyuridine(34) in tRNA + A + H2O. In terms of biological role, catalyzes oxygen-dependent 5-hydroxyuridine (ho5U) modification at position 34 in tRNAs. This chain is tRNA uridine(34) hydroxylase, found in Acinetobacter baumannii (strain AYE).